Consider the following 195-residue polypeptide: Dephospho-CoA kinase (195 aa).

In terms of domain architecture, DPCK spans 3–195; the sequence is IVGLTGGIGS…IALHENYLNH (193 aa). 11-16 contributes to the ATP binding site; it reads GSGKSA.

The protein belongs to the CoaE family.

It localises to the cytoplasm. The catalysed reaction is 3'-dephospho-CoA + ATP = ADP + CoA + H(+). The protein operates within cofactor biosynthesis; coenzyme A biosynthesis; CoA from (R)-pantothenate: step 5/5. Its function is as follows. Catalyzes the phosphorylation of the 3'-hydroxyl group of dephosphocoenzyme A to form coenzyme A. This Acinetobacter baylyi (strain ATCC 33305 / BD413 / ADP1) protein is Dephospho-CoA kinase.